A 291-amino-acid chain; its full sequence is Formamidopyrimidine-DNA glycosylase (291 aa).

The Schiff-base intermediate with DNA role is filled by proline 2. The active-site Proton donor is glutamate 3. Lysine 61 (proton donor; for beta-elimination activity) is an active-site residue. DNA is bound by residues histidine 103, arginine 123, and arginine 165. An FPG-type zinc finger spans residues 251–285 (EVYGRGGQACSRCASTIRRDAFMNRSSFSCPACQP). Arginine 275 (proton donor; for delta-elimination activity) is an active-site residue.

This sequence belongs to the FPG family. In terms of assembly, monomer. Zn(2+) is required as a cofactor.

It carries out the reaction Hydrolysis of DNA containing ring-opened 7-methylguanine residues, releasing 2,6-diamino-4-hydroxy-5-(N-methyl)formamidopyrimidine.. It catalyses the reaction 2'-deoxyribonucleotide-(2'-deoxyribose 5'-phosphate)-2'-deoxyribonucleotide-DNA = a 3'-end 2'-deoxyribonucleotide-(2,3-dehydro-2,3-deoxyribose 5'-phosphate)-DNA + a 5'-end 5'-phospho-2'-deoxyribonucleoside-DNA + H(+). Involved in base excision repair of DNA damaged by oxidation or by mutagenic agents. Acts as a DNA glycosylase that recognizes and removes damaged bases. Has a preference for oxidized purines, such as 7,8-dihydro-8-oxoguanine (8-oxoG). Has AP (apurinic/apyrimidinic) lyase activity and introduces nicks in the DNA strand. Cleaves the DNA backbone by beta-delta elimination to generate a single-strand break at the site of the removed base with both 3'- and 5'-phosphates. In Parafrankia sp. (strain EAN1pec), this protein is Formamidopyrimidine-DNA glycosylase.